A 633-amino-acid chain; its full sequence is Chitinase 2 (633 aa).

The 452-residue stretch at 151–602 (PKLSAYITDW…NAAREGLGYV (452 aa)) folds into the GH18 domain. Chitin-binding positions include 275-276 (QN) and 306-309 (GGWS). The Proton donor role is filled by glutamate 349. Residues tyrosine 350, 422–425 (MSYD), and tryptophan 582 each bind chitin.

The protein belongs to the glycosyl hydrolase 18 family. As to quaternary structure, semipurified toxin complex consists of at least YenA1-YenA2-YenB-YenC1-YenC2-Chi1-Chi2. The Yen-TC:K9 subcomplex is about 26 nm tall and 22 nm in diameter with 5-fold symmetry and 5 copies of YenA1, YenA2, Chi1 and Chi2; the chitinase subunits may be solvent accessible on the exterior the complex. The Yen-TC:K9 subcomplex has no insecticidal activity. The native complex with additional YenB, YenC1 and YenC2 subunits is 16 nm taller and is insecticidal; the toxicity-conferring subunits are present at about 1 copy each.

The protein localises to the secreted. It carries out the reaction Random endo-hydrolysis of N-acetyl-beta-D-glucosaminide (1-&gt;4)-beta-linkages in chitin and chitodextrins.. Toxin complex is secreted when grown at 25 degrees Celsius or less; at higher temperatures the proteins are present intracellularly but not secreted. Its function is as follows. Part of an orally active toxin complex (TC) with strong insecticidal effects on larvae of the Coleoptera Costelytra zealandica, Acrossidius tasmania and Adoryphorus couloni and some Lepidoptera larvae. The TC has an endochitinase activity. This subunit might aid infection by degradation of the larval peritrophic membrane. The sequence is that of Chitinase 2 from Yersinia entomophaga.